Here is a 507-residue protein sequence, read N- to C-terminus: Histidine ammonia-lyase (507 aa).

Residues 141 to 143 (ASG) constitute a cross-link (5-imidazolinone (Ala-Gly)). Residue S142 is modified to 2,3-didehydroalanine (Ser).

This sequence belongs to the PAL/histidase family. Contains an active site 4-methylidene-imidazol-5-one (MIO), which is formed autocatalytically by cyclization and dehydration of residues Ala-Ser-Gly.

The protein resides in the cytoplasm. The catalysed reaction is L-histidine = trans-urocanate + NH4(+). The protein operates within amino-acid degradation; L-histidine degradation into L-glutamate; N-formimidoyl-L-glutamate from L-histidine: step 1/3. This is Histidine ammonia-lyase from Burkholderia ambifaria (strain ATCC BAA-244 / DSM 16087 / CCUG 44356 / LMG 19182 / AMMD) (Burkholderia cepacia (strain AMMD)).